Consider the following 305-residue polypeptide: MASNRQRSLRGPSHPSHMEEPFLQMVQASESLPPSQTWAQREFFLPSESWEFPGFTRQAYHQLALKLPPCTDMKSKVRQRLIHPWKGGAQHTWGFHTWLDVCRLPATFPTQPDRPYDSNVWRWLTDSNAHRCPPTEHPIPPPSWMGQNSFLTFIHCYPTFVDMKRKKQVIFRTVKELKEVEKLKLRSEARAPPLDAQGNIQPPASFKKYRHISAGGRFEPQGLQLMPNPFPNNFARSWPCPNPLPHYQEKVLKLALLPSAPLSQDLIRDFQTLIKDRTALPLHHLSKAQASKSPARKRKRRPGHF.

A disordered region spans residues 284–305 (HLSKAQASKSPARKRKRRPGHF). A compositionally biased stretch (basic residues) spans 294 to 305 (PARKRKRRPGHF).

As to expression, expressed in Testis.

In Homo sapiens (Human), this protein is Testis-expressed protein 52.